A 373-amino-acid chain; its full sequence is Dual-specificity RNA methyltransferase RlmN (373 aa).

The active-site Proton acceptor is the E94. In terms of domain architecture, Radical SAM core spans 100–339 (EEDRATLCVS…VIVRKTRGDD (240 aa)). C107 and C344 form a disulfide bridge. Residues C114, C118, and C121 each contribute to the [4Fe-4S] cluster site. Residues 168–169 (GE), S200, 222–224 (SIH), and N301 contribute to the S-adenosyl-L-methionine site. Catalysis depends on C344, which acts as the S-methylcysteine intermediate.

This sequence belongs to the radical SAM superfamily. RlmN family. [4Fe-4S] cluster is required as a cofactor.

It localises to the cytoplasm. The catalysed reaction is adenosine(2503) in 23S rRNA + 2 reduced [2Fe-2S]-[ferredoxin] + 2 S-adenosyl-L-methionine = 2-methyladenosine(2503) in 23S rRNA + 5'-deoxyadenosine + L-methionine + 2 oxidized [2Fe-2S]-[ferredoxin] + S-adenosyl-L-homocysteine. The enzyme catalyses adenosine(37) in tRNA + 2 reduced [2Fe-2S]-[ferredoxin] + 2 S-adenosyl-L-methionine = 2-methyladenosine(37) in tRNA + 5'-deoxyadenosine + L-methionine + 2 oxidized [2Fe-2S]-[ferredoxin] + S-adenosyl-L-homocysteine. In terms of biological role, specifically methylates position 2 of adenine 2503 in 23S rRNA and position 2 of adenine 37 in tRNAs. m2A2503 modification seems to play a crucial role in the proofreading step occurring at the peptidyl transferase center and thus would serve to optimize ribosomal fidelity. This chain is Dual-specificity RNA methyltransferase RlmN, found in Shewanella sediminis (strain HAW-EB3).